Reading from the N-terminus, the 464-residue chain is 3-isopropylmalate dehydratase large subunit (464 aa).

[4Fe-4S] cluster-binding residues include Cys-345, Cys-405, and Cys-408.

This sequence belongs to the aconitase/IPM isomerase family. LeuC type 1 subfamily. In terms of assembly, heterodimer of LeuC and LeuD. [4Fe-4S] cluster is required as a cofactor.

The enzyme catalyses (2R,3S)-3-isopropylmalate = (2S)-2-isopropylmalate. It participates in amino-acid biosynthesis; L-leucine biosynthesis; L-leucine from 3-methyl-2-oxobutanoate: step 2/4. Catalyzes the isomerization between 2-isopropylmalate and 3-isopropylmalate, via the formation of 2-isopropylmaleate. The chain is 3-isopropylmalate dehydratase large subunit from Bacteroides fragilis (strain ATCC 25285 / DSM 2151 / CCUG 4856 / JCM 11019 / LMG 10263 / NCTC 9343 / Onslow / VPI 2553 / EN-2).